Here is a 687-residue protein sequence, read N- to C-terminus: Protein SDA1 homolog (687 aa).

Phosphoserine occurs at positions 232, 234, and 236. A coiled-coil region spans residues 254–315 (KKGSKNKKKL…SCKERFEVKM (62 aa)). The interval 484 to 509 (LEKGENTEDDEDGWESASLSEEEEED) is disordered. Positions 490–509 (TEDDEDGWESASLSEEEEED) are enriched in acidic residues. T552 carries the post-translational modification Phosphothreonine. Phosphoserine is present on residues S585, S589, and S595. Residues 604 to 651 (KKPKSDKETRLATAMAGRTDRKEFVRKKTKINPFSSSTNKEKKKQKNF) form a disordered region.

The protein belongs to the SDA1 family.

It is found in the nucleus. The protein resides in the nucleolus. Required for 60S pre-ribosomal subunits export to the cytoplasm. The sequence is that of Protein SDA1 homolog (Sdad1) from Mus musculus (Mouse).